The sequence spans 25 residues: M-lycotoxin-Hc1a (25 aa).

Leu25 carries the post-translational modification Leucine amide.

This sequence belongs to the cationic peptide 04 (cupiennin) family. 05 subfamily. Expressed by the venom gland.

The protein localises to the secreted. It is found in the target cell membrane. Functionally, forms pore that permeabilize the cell membrane. Promotes efflux of calcium from synaptosomes, causes hemolysis, and dissipates voltage gradients across muscle membrane. Potently inhibits the growth of bacteria, yeast and Leishmania. Is lethal to lepidopteran larvae. May function both in the prey capture strategy as well as protection from infectious organisms arising from prey ingestion. This chain is M-lycotoxin-Hc1a, found in Hogna carolinensis (Carolina wolf spider).